We begin with the raw amino-acid sequence, 310 residues long: Carbamate kinase 1 (310 aa).

It belongs to the carbamate kinase family.

Its subcellular location is the cytoplasm. The enzyme catalyses hydrogencarbonate + NH4(+) + ATP = carbamoyl phosphate + ADP + H2O + H(+). It participates in metabolic intermediate metabolism; carbamoyl phosphate degradation; CO(2) and NH(3) from carbamoyl phosphate: step 1/1. This is Carbamate kinase 1 (arcC1) from Staphylococcus aureus (strain MRSA252).